Reading from the N-terminus, the 84-residue chain is UPF0386 protein Oant_1614 (84 aa).

The protein belongs to the UPF0386 family.

This is UPF0386 protein Oant_1614 from Brucella anthropi (strain ATCC 49188 / DSM 6882 / CCUG 24695 / JCM 21032 / LMG 3331 / NBRC 15819 / NCTC 12168 / Alc 37) (Ochrobactrum anthropi).